A 211-amino-acid polypeptide reads, in one-letter code: Probable transcriptional regulatory protein SgaR (211 aa).

Residues 10–126 (EVSIVDQNPV…VLLEAVVSVA (117 aa)) enclose the Response regulatory domain. 4-aspartylphosphate is present on Asp-15. Residues 141-206 (NHDPLESLTA…MAVALHVSIN (66 aa)) form the HTH luxR-type domain. Positions 165 to 184 (NLQIAARTGISRNTVKYHLK) form a DNA-binding region, H-T-H motif.

Its function is as follows. Not known. Could act on the sgaA gene expression. The sequence is that of Probable transcriptional regulatory protein SgaR (sgaR) from Hyphomicrobium methylovorum.